A 196-amino-acid polypeptide reads, in one-letter code: Probable GTP-binding protein EngB (196 aa).

Positions 24–196 (ELSEVALSGR…IWNLIEPYIS (173 aa)) constitute an EngB-type G domain. GTP-binding positions include 32–39 (GRSNVGKS), 59–63 (GKTQT), 77–80 (DVPG), 144–147 (TKED), and 176–178 (YSS). Mg(2+) contacts are provided by Ser-39 and Thr-61.

It belongs to the TRAFAC class TrmE-Era-EngA-EngB-Septin-like GTPase superfamily. EngB GTPase family. Mg(2+) is required as a cofactor.

Its function is as follows. Necessary for normal cell division and for the maintenance of normal septation. This Staphylococcus aureus (strain Mu3 / ATCC 700698) protein is Probable GTP-binding protein EngB.